We begin with the raw amino-acid sequence, 303 residues long: Archaeosortase A (303 aa).

7 consecutive transmembrane segments (helical) span residues 3–23, 36–56, 60–80, 93–113, 169–189, 200–220, and 259–279; these read GLLS…GAVA, TAAW…FTLV, YIEG…GWLL, AVAA…FTLL, VVLA…IAAV, LAIA…FIAI, and LAVV…PELL. Cys-173 serves as the catalytic Acyl-thioester intermediate. The active-site Proton donor is the Arg-214.

Belongs to the exosortase/archaeosortase family. Archaeosortase A subfamily.

It is found in the cell membrane. Transpeptidase that recognizes and modifies its substrate by proteolytic cleavage of a sorting signal. Following cleavage, a covalent intermediate is formed via a thioester bond between the archaeosortase and its substrate, which is then transferred and covalently attached to the cell membrane. This sortase recognizes a tripartite structure consisting of a conserved Pro-Gly-Phe (PGF) motif, followed by a transmembrane alpha helix domain and a cluster of basic residues, usually at the C-terminus of target proteins. Confirmed substrates include the cell surface S-layer glycoprotein Csg and HVO_0405. ArtA is required for the C-terminal processing of Csg and for its lipidation and attachment to the archaeal plasma membrane. It is also required for the processing of HVO_0405, which contains an atypical central tripartite structure. The chain is Archaeosortase A from Haloferax volcanii (strain ATCC 29605 / DSM 3757 / JCM 8879 / NBRC 14742 / NCIMB 2012 / VKM B-1768 / DS2) (Halobacterium volcanii).